A 957-amino-acid polypeptide reads, in one-letter code: Melanoma-associated antigen E1 (957 aa).

The tract at residues 1-455 (MSLVSQNSRR…DSEGPKGAEG (455 aa)) is disordered. Polar residues-rich tracts occupy residues 85–96 (SEASSASGQPTI) and 104–130 (VLPT…SVTL). A compositionally biased stretch (low complexity) spans 138–162 (TSRPPTSSEEPSTSVPPTASEVPST). Polar residues-rich tracts occupy residues 219 to 244 (GLST…TEGL), 268 to 320 (PSTS…STSV), 329 to 344 (STSV…STSV), 364 to 380 (LSTS…DTSV), and 414 to 428 (TLFS…NPSK). 2 MAGE domains span residues 491 to 690 (MEQN…YNEA) and 745 to 936 (LESK…YREA). The segment at 743–957 (SRLESKARKL…HRQIFVHNFR (215 aa)) is interaction with DTNA.

As to quaternary structure, interacts with DTNA. Interacts with TRIM28.

The protein resides in the cytoplasm. The protein localises to the perinuclear region. Its subcellular location is the nucleus. It is found in the cell membrane. Its function is as follows. May enhance ubiquitin ligase activity of RING-type zinc finger-containing E3 ubiquitin-protein ligases. Proposed to act through recruitment and/or stabilization of the Ubl-conjugating enzyme (E2) at the E3:substrate complex. The chain is Melanoma-associated antigen E1 (MAGEE1) from Homo sapiens (Human).